The primary structure comprises 156 residues: Large ribosomal subunit protein uL22 (156 aa).

The protein belongs to the universal ribosomal protein uL22 family. Part of the 50S ribosomal subunit.

This protein binds specifically to 23S rRNA. It makes multiple contacts with different domains of the 23S rRNA in the assembled 50S subunit and ribosome. In terms of biological role, the globular domain of the protein is located near the polypeptide exit tunnel on the outside of the subunit, while an extended beta-hairpin is found that lines the wall of the exit tunnel in the center of the 70S ribosome. This is Large ribosomal subunit protein uL22 from Halobacterium salinarum (strain ATCC 700922 / JCM 11081 / NRC-1) (Halobacterium halobium).